The following is a 598-amino-acid chain: Elongation factor 4 (598 aa).

In terms of domain architecture, tr-type G spans 4–181 (KKIRNFAIIA…AIVNLIPPPQ (178 aa)). GTP is bound by residues 16-21 (DHGKST) and 128-131 (NKID).

This sequence belongs to the TRAFAC class translation factor GTPase superfamily. Classic translation factor GTPase family. LepA subfamily.

Its subcellular location is the cell membrane. It catalyses the reaction GTP + H2O = GDP + phosphate + H(+). Its function is as follows. Required for accurate and efficient protein synthesis under certain stress conditions. May act as a fidelity factor of the translation reaction, by catalyzing a one-codon backward translocation of tRNAs on improperly translocated ribosomes. Back-translocation proceeds from a post-translocation (POST) complex to a pre-translocation (PRE) complex, thus giving elongation factor G a second chance to translocate the tRNAs correctly. Binds to ribosomes in a GTP-dependent manner. The protein is Elongation factor 4 of Mesomycoplasma hyopneumoniae (strain 7448) (Mycoplasma hyopneumoniae).